The chain runs to 915 residues: Translation initiation factor IF-2 (915 aa).

Disordered regions lie at residues 1–105 (MSEG…RALT) and 121–295 (VEAA…RAAI). Over residues 57–81 (PGTPSAPEGGSSSAPAPQSGNAPQG) the composition is skewed to low complexity. The span at 84–101 (RSGGGNRGSGRGGAGGAG) shows a compositional bias: gly residues. Composition is skewed to basic and acidic residues over residues 121–135 (VEAA…EQEK) and 143–180 (EEAR…RKAA). Residues 186–195 (AEAPPVPPPA) show a composition bias toward pro residues. 2 stretches are compositionally biased toward low complexity: residues 201–213 (AAPS…SRTA) and 230–239 (KVPVAAPSAP). The span at 243-256 (RLRERGDEGEEERK) shows a compositional bias: basic and acidic residues. Over residues 266–278 (PAPRKAAAPVAKK) the composition is skewed to low complexity. Residues 279–295 (AVAEPRRGGRIDVRAAI) are compositionally biased toward basic and acidic residues. The region spanning 414–584 (PRPPVVTVMG…LLQAEVLDLK (171 aa)) is the tr-type G domain. The segment at 423–430 (GHVDHGKT) is G1. Residue 423–430 (GHVDHGKT) coordinates GTP. Positions 448-452 (GITQH) are G2. The G3 stretch occupies residues 470–473 (DTPG). Residues 470-474 (DTPGH) and 524-527 (NKCD) each bind GTP. Positions 524–527 (NKCD) are G4. Residues 560–562 (SAL) are G5.

Belongs to the TRAFAC class translation factor GTPase superfamily. Classic translation factor GTPase family. IF-2 subfamily.

It localises to the cytoplasm. One of the essential components for the initiation of protein synthesis. Protects formylmethionyl-tRNA from spontaneous hydrolysis and promotes its binding to the 30S ribosomal subunits. Also involved in the hydrolysis of GTP during the formation of the 70S ribosomal complex. This is Translation initiation factor IF-2 from Granulibacter bethesdensis (strain ATCC BAA-1260 / CGDNIH1).